The sequence spans 284 residues: RCS-specific HTH-type transcriptional activator RclR (284 aa).

A disulfide bridge links C21 with C89. The HTH araC/xylS-type domain maps to 177–278 (PRLGAVIQQM…GCTPGEYRER (102 aa)). DNA-binding regions (H-T-H motif) lie at residues 197 to 218 (ESLA…RDVS) and 245 to 268 (VVVI…VREF).

With respect to regulation, oxydation of Cys-21 leads to partial activation of RclR, followed by the formation of an intramolecular disulfide bond between Cys-21 and Cys-89, which stabilizes the active form of RclR. In terms of biological role, involved in reactive chlorine species (RCS) stress resistance. Up-regulates, in response to hypochlorous acid (HOCl), the expression of three genes essential for survival of RCS stress (rclA, rclB and rclC) and its own expression. The polypeptide is RCS-specific HTH-type transcriptional activator RclR (rclR) (Escherichia coli (strain K12)).